A 461-amino-acid polypeptide reads, in one-letter code: MSARCCAGQLACCCGSAGCSLCCGCCPKFRQSRTTRFMYLFYFILVIALCCVMMTPSVMKQVKDHIPFFEEFCKKTQAGGDACENLVGYSAVYRVCFGMACFFALFCLLTLKVNNSKSCRAYIHNGFWFFKLLLLGAMCSGAFFIPDQETFLKVWRYVGAGGSFLFICIQLLLIVQFAHKWNKNWTAGTVRNKLWYASLSLVTLIMYSVAVGGLALMAVFYTQWDDCMDNKILLGVHGGLCVLISLVAISPCVQNRQPHSGLLQSGLISCYVTYLTFSALTSKPEKKVLDEHGKNVTICAPDFGQDLHRDENMVTWLGTLLLIVCISYSCLTSTTRSSSDALQSRYGAPELEVARCCFCFGPDGEDTEEQQNVKKGPRVIYDEKKGTVYSYSYFHFVFFLASLYVMMTLTSWFHYENATIKTFFSGWSVFWVKMASCWMCVLLYLQTLVAPLCCPSRQFSV.

Topologically, residues 1 to 36 (MSARCCAGQLACCCGSAGCSLCCGCCPKFRQSRTTR) are extracellular. The helical transmembrane segment at 37-57 (FMYLFYFILVIALCCVMMTPS) threads the bilayer. Residues 58–90 (VMKQVKDHIPFFEEFCKKTQAGGDACENLVGYS) are Cytoplasmic-facing. The helical transmembrane segment at 91 to 111 (AVYRVCFGMACFFALFCLLTL) threads the bilayer. Topologically, residues 112–125 (KVNNSKSCRAYIHN) are extracellular. Asn-114 carries an N-linked (GlcNAc...) asparagine glycan. A helical membrane pass occupies residues 126–146 (GFWFFKLLLLGAMCSGAFFIP). Over 147-157 (DQETFLKVWRY) the chain is Cytoplasmic. The chain crosses the membrane as a helical span at residues 158 to 178 (VGAGGSFLFICIQLLLIVQFA). At 179–200 (HKWNKNWTAGTVRNKLWYASLS) the chain is on the extracellular side. An N-linked (GlcNAc...) asparagine glycan is attached at Asn-184. A helical transmembrane segment spans residues 201 to 221 (LVTLIMYSVAVGGLALMAVFY). Topologically, residues 222-231 (TQWDDCMDNK) are cytoplasmic. The chain crosses the membrane as a helical span at residues 232–252 (ILLGVHGGLCVLISLVAISPC). Topologically, residues 253–260 (VQNRQPHS) are extracellular. A helical transmembrane segment spans residues 261 to 281 (GLLQSGLISCYVTYLTFSALT). Residues 282–312 (SKPEKKVLDEHGKNVTICAPDFGQDLHRDEN) lie on the Cytoplasmic side of the membrane. The chain crosses the membrane as a helical span at residues 313–333 (MVTWLGTLLLIVCISYSCLTS). Residues 334 to 392 (TTRSSSDALQSRYGAPELEVARCCFCFGPDGEDTEEQQNVKKGPRVIYDEKKGTVYSYS) lie on the Extracellular side of the membrane. Residues 393–413 (YFHFVFFLASLYVMMTLTSWF) traverse the membrane as a helical segment. The Cytoplasmic segment spans residues 414 to 422 (HYENATIKT). The chain crosses the membrane as a helical span at residues 423 to 443 (FFSGWSVFWVKMASCWMCVLL). The Extracellular segment spans residues 444–461 (YLQTLVAPLCCPSRQFSV).

It belongs to the TDE1 family.

It is found in the cell membrane. The catalysed reaction is a 1,2-diacyl-sn-glycero-3-phospho-L-serine(in) = a 1,2-diacyl-sn-glycero-3-phospho-L-serine(out). It carries out the reaction a 1,2-diacyl-sn-glycero-3-phosphocholine(in) = a 1,2-diacyl-sn-glycero-3-phosphocholine(out). The enzyme catalyses a 1,2-diacyl-sn-glycero-3-phosphoethanolamine(in) = a 1,2-diacyl-sn-glycero-3-phosphoethanolamine(out). In terms of biological role, restriction factor required to restrict infectivity of gammaretroviruses: acts by inhibiting an early step of viral infection. Impairs the penetration of the viral particle into the cytoplasm. Non-ATP-dependent, non-specific lipid transporter for phosphatidylserine, phosphatidylcholine, and phosphatidylethanolamine. Functions as a scramblase that flips lipids in both directions across the membrane. Phospholipid scrambling results in gammaretroviral surface exposure of phosphatidylserine and loss of membrane asymmetry, which leads to loss of infectivity. Enhances the incorporation of serine into phosphatidylserine and sphingolipids. May play a role in providing serine molecules for the formation of myelin glycosphingolipids in oligodendrocytes. The polypeptide is Serine incorporator 5 (Serinc5) (Mus musculus (Mouse)).